Here is a 323-residue protein sequence, read N- to C-terminus: tRNA dimethylallyltransferase (323 aa).

18–25 (GPTASGKS) lines the ATP pocket. Position 20-25 (20-25 (TASGKS)) interacts with substrate. Interaction with substrate tRNA regions lie at residues 43-46 (DSAQ), 167-171 (QRIQR), and 249-254 (RCVGYR).

It belongs to the IPP transferase family. Monomer. Mg(2+) serves as cofactor.

It carries out the reaction adenosine(37) in tRNA + dimethylallyl diphosphate = N(6)-dimethylallyladenosine(37) in tRNA + diphosphate. Catalyzes the transfer of a dimethylallyl group onto the adenine at position 37 in tRNAs that read codons beginning with uridine, leading to the formation of N6-(dimethylallyl)adenosine (i(6)A). The chain is tRNA dimethylallyltransferase from Nitrosospira multiformis (strain ATCC 25196 / NCIMB 11849 / C 71).